The following is a 126-amino-acid chain: Glycine cleavage system H protein (126 aa).

A Lipoyl-binding domain is found at Asp19–Glu100. An N6-lipoyllysine modification is found at Lys60.

The protein belongs to the GcvH family. In terms of assembly, the glycine cleavage system is composed of four proteins: P, T, L and H. It depends on (R)-lipoate as a cofactor.

Functionally, the glycine cleavage system catalyzes the degradation of glycine. The H protein shuttles the methylamine group of glycine from the P protein to the T protein. In Koribacter versatilis (strain Ellin345), this protein is Glycine cleavage system H protein.